We begin with the raw amino-acid sequence, 213 residues long: Phosphatidylserine decarboxylase proenzyme (213 aa).

The active-site Schiff-base intermediate with substrate; via pyruvic acid is S180. S180 carries the post-translational modification Pyruvic acid (Ser); by autocatalysis.

It belongs to the phosphatidylserine decarboxylase family. PSD-A subfamily. In terms of assembly, heterodimer of a large membrane-associated beta subunit and a small pyruvoyl-containing alpha subunit. The cofactor is pyruvate. Post-translationally, is synthesized initially as an inactive proenzyme. Formation of the active enzyme involves a self-maturation process in which the active site pyruvoyl group is generated from an internal serine residue via an autocatalytic post-translational modification. Two non-identical subunits are generated from the proenzyme in this reaction, and the pyruvate is formed at the N-terminus of the alpha chain, which is derived from the carboxyl end of the proenzyme. The post-translation cleavage follows an unusual pathway, termed non-hydrolytic serinolysis, in which the side chain hydroxyl group of the serine supplies its oxygen atom to form the C-terminus of the beta chain, while the remainder of the serine residue undergoes an oxidative deamination to produce ammonia and the pyruvoyl prosthetic group on the alpha chain.

The protein localises to the cell membrane. It carries out the reaction a 1,2-diacyl-sn-glycero-3-phospho-L-serine + H(+) = a 1,2-diacyl-sn-glycero-3-phosphoethanolamine + CO2. It functions in the pathway phospholipid metabolism; phosphatidylethanolamine biosynthesis; phosphatidylethanolamine from CDP-diacylglycerol: step 2/2. Its function is as follows. Catalyzes the formation of phosphatidylethanolamine (PtdEtn) from phosphatidylserine (PtdSer). The protein is Phosphatidylserine decarboxylase proenzyme of Carboxydothermus hydrogenoformans (strain ATCC BAA-161 / DSM 6008 / Z-2901).